The primary structure comprises 418 residues: Transmembrane protease serine 11A (418 aa).

Residues 1-18 (MMYRTVGFGTRSRNLKPW) are Cytoplasmic-facing. Residues 19 to 39 (MIAVLIVLSLTVVAVTIGLLV) form a helical; Signal-anchor for type II membrane protein membrane-spanning segment. Over 40 to 418 (HFLVFDQKKE…RNWIASKTGI (379 aa)) the chain is Extracellular. Residues 47–164 (KKEYYHGSFK…SSVQVNAMSS (118 aa)) enclose the SEA domain. Asn153 carries an N-linked (GlcNAc...) asparagine glycan. One can recognise a Peptidase S1 domain in the interval 187–417 (IASGVIAPKA…YRNWIASKTG (231 aa)). A disulfide bridge connects residues Cys212 and Cys228. Residues His227 and Asp272 each act as charge relay system in the active site. Asn303 carries an N-linked (GlcNAc...) asparagine glycan. Disulfide bonds link Cys337-Cys353 and Cys364-Cys393. The Charge relay system role is filled by Ser368.

It belongs to the peptidase S1 family. As to quaternary structure, may interact with ZBTB17. As to expression, expressed in esophagus, liver, colon and lung. Down-regulated in esophagus cancers.

It localises to the membrane. Probable serine protease which may play a role in cellular senescence. Overexpression inhibits cell growth and induce G1 cell cycle arrest. This Homo sapiens (Human) protein is Transmembrane protease serine 11A (TMPRSS11A).